The following is a 601-amino-acid chain: Protein NRT1/ PTR FAMILY 4.4 (601 aa).

The next 2 membrane-spanning stretches (helical) occupy residues 44–64 (AALF…AVGN) and 82–102 (ANLV…GGFL). At Thr-112 the chain carries Phosphothreonine. Transmembrane regions (helical) follow at residues 113–133 (MLVF…QAHL), 160–180 (TLYT…PNII), 198–218 (FFNA…TLLV), 228–248 (VGFG…VAGT), 337–357 (ILLS…ILAQ), 386–406 (AIPY…FVPL), 420–440 (LQRI…AALV), 453–473 (VMLS…SEMF), 493–513 (FLTA…SVLV), and 544–564 (HFYW…LFWS).

The protein belongs to the major facilitator superfamily. Proton-dependent oligopeptide transporter (POT/PTR) (TC 2.A.17) family. Expressed in shoots, roots and stems.

Its subcellular location is the membrane. This is Protein NRT1/ PTR FAMILY 4.4 (NPF4.4) from Arabidopsis thaliana (Mouse-ear cress).